The following is a 426-amino-acid chain: Enolase (426 aa).

Q165 is a (2R)-2-phosphoglycerate binding site. E207 functions as the Proton donor in the catalytic mechanism. Residues D244, E285, and D312 each contribute to the Mg(2+) site. Residues K337, R366, S367, and K388 each contribute to the (2R)-2-phosphoglycerate site. Catalysis depends on K337, which acts as the Proton acceptor.

It belongs to the enolase family. The cofactor is Mg(2+).

It is found in the cytoplasm. It localises to the secreted. The protein resides in the cell surface. It carries out the reaction (2R)-2-phosphoglycerate = phosphoenolpyruvate + H2O. Its pathway is carbohydrate degradation; glycolysis; pyruvate from D-glyceraldehyde 3-phosphate: step 4/5. In terms of biological role, catalyzes the reversible conversion of 2-phosphoglycerate (2-PG) into phosphoenolpyruvate (PEP). It is essential for the degradation of carbohydrates via glycolysis. The protein is Enolase of Thermosynechococcus vestitus (strain NIES-2133 / IAM M-273 / BP-1).